A 224-amino-acid polypeptide reads, in one-letter code: Dimethyl sulfoxide reductase transcriptional activator (224 aa).

The 52-residue stretch at 158-209 folds into the HTH bat-type domain; that stretch reads LTDKQREAAAAAVAKGYYATPRGADLSDLATALGISKSAVSQRLSAVESKLA.

Involved in activating dmsEABCD gene expression related to dimethyl sulfoxide (DMSO) reductase. Required for anaerobic respiration on dimethyl sulfoxide (DMSO) and trimethylamine N-oxide (TMAO). The chain is Dimethyl sulfoxide reductase transcriptional activator (dmsR) from Halobacterium salinarum (strain ATCC 700922 / JCM 11081 / NRC-1) (Halobacterium halobium).